Consider the following 377-residue polypeptide: Naringenin,2-oxoglutarate 3-dioxygenase (377 aa).

One can recognise a Fe2OG dioxygenase domain in the interval 193 to 297 (CVDMDQKVVV…RLSIATFQNP (105 aa)). Fe cation contacts are provided by histidine 220, aspartate 222, and histidine 278. A 2-oxoglutarate-binding site is contributed by arginine 288.

The protein belongs to the iron/ascorbate-dependent oxidoreductase family. Fe(2+) is required as a cofactor. Requires L-ascorbate as cofactor.

The catalysed reaction is a (2S)-flavan-4-one + 2-oxoglutarate + O2 = a (2R,3R)-dihydroflavonol + succinate + CO2. It participates in secondary metabolite biosynthesis; flavonoid biosynthesis. Functionally, catalyzes the 3-beta-hydroxylation of 2S-flavanones to 2R,3R-dihydroflavonols which are intermediates in the biosynthesis of flavonols, anthocyanidins, catechins and proanthocyanidins in plants. This chain is Naringenin,2-oxoglutarate 3-dioxygenase, found in Hordeum vulgare (Barley).